The sequence spans 147 residues: Large ribosomal subunit protein uL13 (147 aa).

Positions 126–147 (AGPTHPHQAQQPVPYEIKQVAQ) are disordered.

The protein belongs to the universal ribosomal protein uL13 family. In terms of assembly, part of the 50S ribosomal subunit.

This protein is one of the early assembly proteins of the 50S ribosomal subunit, although it is not seen to bind rRNA by itself. It is important during the early stages of 50S assembly. The chain is Large ribosomal subunit protein uL13 from Parafrankia sp. (strain EAN1pec).